A 166-amino-acid polypeptide reads, in one-letter code: NAD(P)H-quinone oxidoreductase subunit I, chloroplastic (166 aa).

4Fe-4S ferredoxin-type domains lie at 55 to 84 and 95 to 124; these read GRIHFEFDKCIACEVCVRVCPIDLPVVDWK and LNYSIDFGICIFCGNCVEYCPTNCLSMTEE. [4Fe-4S] cluster-binding residues include C64, C67, C70, C74, C104, C107, C110, and C114.

It belongs to the complex I 23 kDa subunit family. In terms of assembly, NDH is composed of at least 16 different subunits, 5 of which are encoded in the nucleus. [4Fe-4S] cluster serves as cofactor.

It localises to the plastid. The protein resides in the chloroplast thylakoid membrane. The enzyme catalyses a plastoquinone + NADH + (n+1) H(+)(in) = a plastoquinol + NAD(+) + n H(+)(out). The catalysed reaction is a plastoquinone + NADPH + (n+1) H(+)(in) = a plastoquinol + NADP(+) + n H(+)(out). Its function is as follows. NDH shuttles electrons from NAD(P)H:plastoquinone, via FMN and iron-sulfur (Fe-S) centers, to quinones in the photosynthetic chain and possibly in a chloroplast respiratory chain. The immediate electron acceptor for the enzyme in this species is believed to be plastoquinone. Couples the redox reaction to proton translocation, and thus conserves the redox energy in a proton gradient. This Oblivia mikanioides (Salmea mikanioides) protein is NAD(P)H-quinone oxidoreductase subunit I, chloroplastic.